Here is a 527-residue protein sequence, read N- to C-terminus: MYTLSVADHSNTPPAIKIPERYNAADDLIGRNLLAGRGGKTVYIDDAGSYTYDELALRVNRCGSALRTTLGLQPKDRVLVCVLDGIDFPTTFLGAIKGGVVPIAINTLLTESDYEYMLTDSAARVAVVSQELLPLFAPMLGKVPTLEHLVVAGGAGEDSLAALLATGSEQFEAAPTRPDDHCFWLYSSGSTGAPKGTVHIHSDLIHTAELYARPILGIREGDVVFSAAKLFFAYGLGNGLIFPLAVGATAVLMAERPTPAAVFERLRRHQPDIFYGVPTLYASMLANPDCPKEGELRLRACTSAGEALPEDVGRRWQARFGVDILDGIGSTEMLHIFLSNRAGDVHYGTSGKPVPGYRLRLIDEDGAEITTAGVAGELQISGPSSAVMYWNNPEKTAATFMGEWTRSGDKYLVNDEGYYVYAGRSDDMLKVSGIYVSPIEVESALIAHEAVLEAAVVGWEDEDHLIKPKAFIVLKPGYGAGEALRTDLKAHVKNLLAPYKYPRWIEFVDDLPKTATGKIQRFKLRSA.

It belongs to the ATP-dependent AMP-binding enzyme family. Benzoate-CoA ligase subfamily. As to quaternary structure, monomer.

The catalysed reaction is benzoate + ATP + CoA = benzoyl-CoA + AMP + diphosphate. Catalyzes the ligation of benzoate and CoA to form benzoyl-CoA at the expense of ATP. The enzyme also ligates 2-aminobenzoate and CoA. The enzyme shows activity toward a number of benzoate derivatives. This chain is Benzoate--CoA ligase (bclA), found in Thauera aromatica.